The chain runs to 717 residues: RNA helicase NPH-II (717 aa).

The 192-residue stretch at Phe-193–Tyr-384 folds into the Helicase ATP-binding domain. ATP is bound at residue Gly-206–Thr-213. A DEXH box motif is present at residues Asp-331–His-334. The region spanning Ile-406–Tyr-566 is the Helicase C-terminal domain.

The protein belongs to the DEAD box helicase family. DEAH subfamily. Monomer.

The protein resides in the virion. The enzyme catalyses ATP + H2O = ADP + phosphate + H(+). Its function is as follows. NTP-dependent helicase that catalyzes unidirectional unwinding of 3'tailed duplex RNAs and plays an important role during transcription of early mRNAs, presumably by preventing R-loop formation behind the elongating RNA polymerase. Might also play a role in the export of newly synthesized mRNA chains out of the core into the cytoplasm. Required for replication and propagation of viral particles. This Melanoplus sanguinipes (Migratory grasshopper) protein is RNA helicase NPH-II (NPH2).